Reading from the N-terminus, the 149-residue chain is 3-dehydroquinate dehydratase (149 aa).

Catalysis depends on Tyr-26, which acts as the Proton acceptor. Substrate contacts are provided by Asn-78, His-84, and Asp-91. The active-site Proton donor is His-104. Substrate is bound by residues 105-106 and Arg-115; that span reads LS.

Belongs to the type-II 3-dehydroquinase family. Homododecamer.

It carries out the reaction 3-dehydroquinate = 3-dehydroshikimate + H2O. It participates in metabolic intermediate biosynthesis; chorismate biosynthesis; chorismate from D-erythrose 4-phosphate and phosphoenolpyruvate: step 3/7. Its function is as follows. Catalyzes a trans-dehydration via an enolate intermediate. This chain is 3-dehydroquinate dehydratase, found in Polynucleobacter necessarius subsp. necessarius (strain STIR1).